We begin with the raw amino-acid sequence, 318 residues long: MIDLSPLARRLAGTPLAEWANTLQVQLDKKMEKGHGDLERWQSALDALPKIQPTEVDLLDGLKLDTNCDDETRAQMRTALMGLSPWRKGPFDLFGVHVDTEWRSDWKWSRVSPHLDLKGKRILDVGCGNGYYMWRMLGAGADSVIGVDPNWLFFCQFQAVQRYLSEPNAWHLPFPFEDLPPNLEGFDTVFSMGVFYHRRSPIEHLLALKDCLVKGGELVLETLVVEGDKHQVLVPEDRYAQMRNVWFLPSVPALELWLRRAGFTDVRCVDVSMTTVDEQRGTEWMKYQSLSDFLDPDDHSKTIEGLPAPMRAVIVAKK.

The carboxy-S-adenosyl-L-methionine site is built by Lys88, Trp102, Lys107, Gly126, Met192, Tyr196, and Arg311.

This sequence belongs to the class I-like SAM-binding methyltransferase superfamily. CmoB family. Homotetramer.

The catalysed reaction is carboxy-S-adenosyl-L-methionine + 5-hydroxyuridine(34) in tRNA = 5-carboxymethoxyuridine(34) in tRNA + S-adenosyl-L-homocysteine + H(+). In terms of biological role, catalyzes carboxymethyl transfer from carboxy-S-adenosyl-L-methionine (Cx-SAM) to 5-hydroxyuridine (ho5U) to form 5-carboxymethoxyuridine (cmo5U) at position 34 in tRNAs. This chain is tRNA U34 carboxymethyltransferase, found in Pseudomonas fluorescens (strain Pf0-1).